A 96-amino-acid chain; its full sequence is uncharacterized protein (96 aa).

The N-terminal stretch at 1–23 (MKQFYSVVLTIIIYISSQSNVVS) is a signal peptide. 3 disulfide bridges follow: Cys-60–Cys-74, Cys-67–Cys-78, and Cys-73–Cys-83.

The protein localises to the secreted. This is an uncharacterized protein from Schistosoma japonicum (Blood fluke).